The sequence spans 70 residues: U2-agatoxin-Ao1b (70 aa).

An N-terminal signal peptide occupies residues 1-20 (MRAIISLILISAMVFSMIAA). Positions 21 to 34 (VPEEEGLQLSEDER) are excised as a propeptide. 3 disulfide bridges follow: Cys-37-Cys-53, Cys-44-Cys-58, and Cys-52-Cys-68. Leu-69 carries the leucine amide modification.

The protein belongs to the neurotoxin 01 (U2-agtx) family. As to expression, expressed by the venom gland.

It is found in the secreted. Its function is as follows. Insect active toxin causing rapid but reversible paralysis in crickets. No activity shown in mammals. Does not show effect on mammalian voltage-gated calcium channels. This chain is U2-agatoxin-Ao1b, found in Agelena orientalis (Funnel-web spider).